A 902-amino-acid polypeptide reads, in one-letter code: MKIAVIGQSLFGQEVYCHLRKEGHEVVGVFTVPDKDGKADPLGLEAEKDGVPVFKYSRWRAKGQALPDVVAKYQALGAELNVLPFCSQFIPMEIISAPRHGSIIYHPSLLPRHRGASAINWTLIHGDKKGGFSIFWADDGLDTGDLLLQKECEVLPDDTVSTLYNRFLFPEGIKGMVQAVRLIAEGKAPRLPQPEEGATYEGIQKKETAKINWDQPAEAIHNWIRGNDKVPGAWTEACEQKLTFFNSTLNTSGLVPEGDALPIPGAHRPGVVTKAGLILFGNDDKMLLVKNIQLEDGKMILASNFFKGAASSVLELTEAELVTAEAVRSVWQRILPKVLEVEDSTDFFKSGAASVDVVRLVEEVKELCDGLELENEDVYMASTFGDFIQLLVRKLRGDDEEGECSIDYVEMAVNKRTVRMPHQLFIGGEFVDAEGAKTSETINPTDGSVICQVSLAQVTDVDKAVAAAKDAFENGRWGKISARDRGRLMYRLADLMEQHQEELATIEALDAGAVYTLALKTHVGMSIQTFRYFAGWCDKIQGSTIPINQARPNRNLTLTRKEPVGVCGIIIPWNYPLMMLSWKTAACLAAGNTVVIKPAQVTPLTALKFAELTLKAGIPKGVVNVLPGSGSLVGQRLSDHPDVRKIGFTGSTEVGKHIMKSCAISNVKKVSLELGGKSPLIIFADCDLNKAVQMGMSSVFFNKGENCIAAGRLFVEDSIHDEFVRRVVEEVRKMKVGNPLDRDTDHGPQNHHAHLVKLMEYCQHGVKEGATLVCGGNQVPRPGFFFEPTVFTDVEDHMFIAKEESFGPVMIISRFADGDLDAVLSRANATEFGLASGVFTRDINKALYVSDKLQAGTVFVNTYNKTDVAAPFGGFKQSGFGKDLGEAALNEYLRVKTVTFEY.

The hydrolase domain stretch occupies residues 1–310 (MKIAVIGQSL…LASNFFKGAA (310 aa)). S9 is modified (phosphoserine). The residue at position 38 (K38) is an N6-succinyllysine. (6R)-10-formyltetrahydrofolate is bound at residue 88–90 (QFI). The active-site Proton donor is H106. A (6R)-10-formyltetrahydrofolate-binding site is contributed by D142. Positions 318–395 (EAELVTAEAV…DFIQLLVRKL (78 aa)) constitute a Carrier domain. The residue at position 354 (S354) is an O-(pantetheine 4'-phosphoryl)serine. The aldehyde dehydrogenase domain stretch occupies residues 417 to 902 (TVRMPHQLFI…LRVKTVTFEY (486 aa)). NADP(+) contacts are provided by residues 571 to 573 (IPW) and 597 to 600 (KPAQ). A phosphoserine mark is found at S629 and S631. NADP(+)-binding positions include 630 to 635 (GSLVGQ) and 650 to 651 (GS). N6-succinyllysine is present on K660. E673 (proton acceptor) is an active-site residue. NADP(+) is bound at residue 673-674 (EL). The active-site Proton donor is the C707. K757 lines the NADP(+) pocket. K767 is subject to N6-succinyllysine. An NADP(+)-binding site is contributed by 804–806 (ESF). Phosphoserine is present on S825. K882 is modified (N6-acetyllysine).

In the N-terminal section; belongs to the GART family. The protein in the C-terminal section; belongs to the aldehyde dehydrogenase family. ALDH1L subfamily. As to quaternary structure, homotetramer. Phosphopantetheinylation at Ser-354 by AASDHPPT is required for the formyltetrahydrofolate dehydrogenase activity. Highly expressed in liver, pancreas and kidney.

It is found in the cytoplasm. The protein resides in the cytosol. The catalysed reaction is (6R)-10-formyltetrahydrofolate + NADP(+) + H2O = (6S)-5,6,7,8-tetrahydrofolate + CO2 + NADPH + H(+). Functionally, cytosolic 10-formyltetrahydrofolate dehydrogenase that catalyzes the NADP(+)-dependent conversion of 10-formyltetrahydrofolate to tetrahydrofolate and carbon dioxide. May also have an NADP(+)-dependent aldehyde dehydrogenase activity towards formaldehyde, acetaldehyde, propionaldehyde, and benzaldehyde. This chain is Cytosolic 10-formyltetrahydrofolate dehydrogenase, found in Homo sapiens (Human).